The sequence spans 206 residues: Bacterial microcompartment protein trimer-3 (206 aa).

2 BMC circularly permuted domains span residues 2-104 (ELRA…RLAP) and 105-206 (RVVS…DNRG). The Pore gating residues signature appears at 67 to 68 (ER).

This sequence belongs to the EutL/PduB family. In terms of assembly, homotrimerizes to form a pseudohexamer. These stack, with the concave faces together, with the concave faces together, in purified bacterial microcompartments (BMC).

It is found in the bacterial microcompartment. Its function is as follows. A minor component of the bacterial microcompartment (BMC) shell. Expression of 5 proteins in E.coli (BMC-H (Hoch_5815), BMC-P (Hoch_5814), and 3 BMC-T (Hoch_5812, Hoch_5816, Hoch_3341)) forms 40 nm artificial BMCs with a molecular mass of 6.5 MDa. One of 2 stacked pseudohexamers in the BMC. There are 20 BMC-T pseudohexamers per BMC, composed of mixed BMC-T1, BMC-T2 and BMC-T3. The shell facets are 20-30 Angstroms thick, with 1 of the stacked BMC-T trimers protruding to the exterior. The stacked trimers may serve as conduits to allow metabolite flux across the protein shell, gated by Arg-68 which contacts Glu-67 in an adjacent subunit; they are flexible enough to play a role in accommodating variations in shell assembly. The polypeptide is Bacterial microcompartment protein trimer-3 (Haliangium ochraceum (strain DSM 14365 / JCM 11303 / SMP-2)).